The following is a 463-amino-acid chain: Trigger factor (463 aa).

Residues 162–243 (GDHVSIDLSA…VHSVKLKELP (82 aa)) enclose the PPIase FKBP-type domain. Residues 427–444 (SGNTIEPPTPVHTETITV) are compositionally biased toward polar residues. The interval 427–463 (SGNTIEPPTPVHTETITVASGDEETEESAAEQGETEK) is disordered.

This sequence belongs to the FKBP-type PPIase family. Tig subfamily.

It localises to the cytoplasm. The enzyme catalyses [protein]-peptidylproline (omega=180) = [protein]-peptidylproline (omega=0). In terms of biological role, involved in protein export. Acts as a chaperone by maintaining the newly synthesized protein in an open conformation. Functions as a peptidyl-prolyl cis-trans isomerase. In Thermobifida fusca (strain YX), this protein is Trigger factor.